Here is a 1367-residue protein sequence, read N- to C-terminus: Histone acetyltransferase HAC2 (1367 aa).

The interval 110-151 (TSSIPGSSGSASETNSGSDITKQDFKNDSPSDSKKVQGSSTS) is disordered. Residues 111-127 (SSIPGSSGSASETNSGS) are compositionally biased toward low complexity. Positions 130–144 (TKQDFKNDSPSDSKK) are enriched in basic and acidic residues. Repeat copies occupy residues 188 to 200 (KLGTVVDIVEPMK), 223 to 235 (KVYSFADVVTTTK), 251 to 263 (KLGTVVDIIEPMK), 286 to 298 (KVYSFADVVTTTK), 314 to 326 (KLGTVVDIVEPMK), 349 to 361 (KVYSFADVVTTTK), 377 to 389 (KLGTVVDIVEPMK), 418 to 430 (KLGTVVDIVEPMK), 432 to 444 (DEGSKCEVTTTNK), 459 to 471 (KLGIGVDIVEPMK), 473 to 485 (DEGTKCEVTTTNK), and 500 to 512 (KLGIGVDIVEPMK). The segment at 188–512 (KLGTVVDIVE…IGVDIVEPMK (325 aa)) is 12 X 13 AA approximate repeats. A PHD-type zinc finger spans residues 688-765 (HQICSPCHSR…EYICPTCLLE (78 aa)). The CBP/p300-type HAT domain occupies 780 to 1213 (DSGAKDLPET…ILHHLHTSNK (434 aa)). Acetyl-CoA is bound by residues 903–905 (LDS), 922–923 (RT), and W978. Residues 1094 to 1157 (ELNYSCTRCS…QLSKVQVNGV (64 aa)) form a ZZ-type 1; degenerate zinc finger. The Zn(2+) site is built by C1099, C1102, C1123, C1126, C1225, C1228, C1240, C1243, C1249, C1252, H1261, and H1263. Residues 1220 to 1273 (SSSLTCTACKKDVSTTIYFPCLLCPDYRACTGCYTKNRTLRHLHIFPTLPSANR) form a ZZ-type 2 zinc finger. The TAZ-type zinc-finger motif lies at 1274 to 1359 (APSRTVMVLE…NCPVPQCRDR (86 aa)).

As to expression, rosette leaves, stems and flowers.

It is found in the nucleus. It carries out the reaction L-lysyl-[protein] + acetyl-CoA = N(6)-acetyl-L-lysyl-[protein] + CoA + H(+). Its function is as follows. Acetyltransferase enzyme. Acetylates histones, giving a specific tag for transcriptional activation. No acetyltransferase activity found in vitro. In Arabidopsis thaliana (Mouse-ear cress), this protein is Histone acetyltransferase HAC2 (HAC2).